Consider the following 175-residue polypeptide: Large ribosomal subunit protein uL10 (175 aa).

This sequence belongs to the universal ribosomal protein uL10 family. Part of the ribosomal stalk of the 50S ribosomal subunit. The N-terminus interacts with L11 and the large rRNA to form the base of the stalk. The C-terminus forms an elongated spine to which L12 dimers bind in a sequential fashion forming a multimeric L10(L12)X complex.

Its function is as follows. Forms part of the ribosomal stalk, playing a central role in the interaction of the ribosome with GTP-bound translation factors. This Prochlorococcus marinus (strain MIT 9301) protein is Large ribosomal subunit protein uL10.